Reading from the N-terminus, the 689-residue chain is Glycine--tRNA ligase beta subunit (689 aa).

This sequence belongs to the class-II aminoacyl-tRNA synthetase family. In terms of assembly, tetramer of two alpha and two beta subunits.

It localises to the cytoplasm. The catalysed reaction is tRNA(Gly) + glycine + ATP = glycyl-tRNA(Gly) + AMP + diphosphate. This is Glycine--tRNA ligase beta subunit from Sodalis glossinidius (strain morsitans).